Reading from the N-terminus, the 121-residue chain is Large ribosomal subunit protein bL12 (121 aa).

This sequence belongs to the bacterial ribosomal protein bL12 family. Homodimer. Part of the ribosomal stalk of the 50S ribosomal subunit. Forms a multimeric L10(L12)X complex, where L10 forms an elongated spine to which 2 to 4 L12 dimers bind in a sequential fashion. Binds GTP-bound translation factors.

In terms of biological role, forms part of the ribosomal stalk which helps the ribosome interact with GTP-bound translation factors. Is thus essential for accurate translation. The protein is Large ribosomal subunit protein bL12 of Pectobacterium atrosepticum (strain SCRI 1043 / ATCC BAA-672) (Erwinia carotovora subsp. atroseptica).